A 208-amino-acid polypeptide reads, in one-letter code: Probable transcriptional regulator ycf29 (208 aa).

In terms of domain architecture, Response regulatory spans 11–118; it reads KLILIEPEEH…ELIAIISNLI (108 aa). A 4-aspartylphosphate modification is found at Asp-60. The region spanning 146 to 208 is the HTH luxR-type domain; that stretch reads TSFSYINLTV…NRIQILSYFN (63 aa).

Its subcellular location is the plastid. It is found in the chloroplast. This chain is Probable transcriptional regulator ycf29 (ycf29), found in Guillardia theta (Cryptophyte).